Here is a 546-residue protein sequence, read N- to C-terminus: uncharacterized protein (546 aa).

Disordered stretches follow at residues 37–101 (KEND…NQKL), 269–300 (QNKA…QPEV), and 392–443 (LSDL…TSAC). 2 stretches are compositionally biased toward basic and acidic residues: residues 81–93 (DDVK…ENNQ) and 274–283 (ADLRKTESHG). Low complexity predominate over residues 284-298 (THSQSTPPQHSSSQP).

This is an uncharacterized protein from Homo sapiens (Human).